A 147-amino-acid chain; its full sequence is Deoxyuridine 5'-triphosphate nucleotidohydrolase (147 aa).

Substrate is bound by residues 67–69 (RSG), Asn-80, and 84–86 (LID).

The protein belongs to the dUTPase family. Mg(2+) serves as cofactor.

It catalyses the reaction dUTP + H2O = dUMP + diphosphate + H(+). Its pathway is pyrimidine metabolism; dUMP biosynthesis; dUMP from dCTP (dUTP route): step 2/2. Its function is as follows. This enzyme is involved in nucleotide metabolism: it produces dUMP, the immediate precursor of thymidine nucleotides and it decreases the intracellular concentration of dUTP so that uracil cannot be incorporated into DNA. In Dictyoglomus turgidum (strain DSM 6724 / Z-1310), this protein is Deoxyuridine 5'-triphosphate nucleotidohydrolase.